Consider the following 277-residue polypeptide: Undecaprenyl-diphosphatase (277 aa).

A run of 7 helical transmembrane segments spans residues 5-25, 44-64, 86-106, 110-130, 184-204, 219-239, and 255-275; these read WTAAQALILGVVEGLTEFLPI, RAMAFNIIIQLGAILAVVWEF, LNLLIAFMPAVVLGVIFADTI, LFNAITVATALVVGGVIMLWA, AATEFSFFLAMPTMVGAAVYS, VFAIGFITSFIFAMIAVRALL, and IAFGLLILATWQFGWIDWASA.

Belongs to the UppP family.

Its subcellular location is the cell inner membrane. It carries out the reaction di-trans,octa-cis-undecaprenyl diphosphate + H2O = di-trans,octa-cis-undecaprenyl phosphate + phosphate + H(+). Its function is as follows. Catalyzes the dephosphorylation of undecaprenyl diphosphate (UPP). Confers resistance to bacitracin. The sequence is that of Undecaprenyl-diphosphatase from Pseudomonas savastanoi pv. phaseolicola (strain 1448A / Race 6) (Pseudomonas syringae pv. phaseolicola (strain 1448A / Race 6)).